The sequence spans 107 residues: MTKSELVAQLAARFPQLVLKDADFAVKTMLDAMSEALANGHRIEIRGFGSFGLNRRPSRVGRNPKSGEKVLVPEKYVPHFKPGKELRERVDRRAGEPLKAEEPDDDL.

Positions 82-101 (PGKELRERVDRRAGEPLKAE) are enriched in basic and acidic residues. Residues 82 to 107 (PGKELRERVDRRAGEPLKAEEPDDDL) are disordered.

The protein belongs to the bacterial histone-like protein family. In terms of assembly, heterodimer of an alpha and a beta chain.

Its function is as follows. This protein is one of the two subunits of integration host factor, a specific DNA-binding protein that functions in genetic recombination as well as in transcriptional and translational control. The sequence is that of Integration host factor subunit beta from Paraburkholderia phytofirmans (strain DSM 17436 / LMG 22146 / PsJN) (Burkholderia phytofirmans).